Here is a 268-residue protein sequence, read N- to C-terminus: Tryptophan synthase alpha chain (268 aa).

Catalysis depends on proton acceptor residues Glu49 and Asp60.

Belongs to the TrpA family. As to quaternary structure, tetramer of two alpha and two beta chains.

It catalyses the reaction (1S,2R)-1-C-(indol-3-yl)glycerol 3-phosphate + L-serine = D-glyceraldehyde 3-phosphate + L-tryptophan + H2O. Its pathway is amino-acid biosynthesis; L-tryptophan biosynthesis; L-tryptophan from chorismate: step 5/5. Its function is as follows. The alpha subunit is responsible for the aldol cleavage of indoleglycerol phosphate to indole and glyceraldehyde 3-phosphate. The polypeptide is Tryptophan synthase alpha chain (Escherichia coli O1:K1 / APEC).